Here is a 56-residue protein sequence, read N- to C-terminus: Large ribosomal subunit protein bL33 (56 aa).

The protein belongs to the bacterial ribosomal protein bL33 family.

In Glaesserella parasuis serovar 5 (strain SH0165) (Haemophilus parasuis), this protein is Large ribosomal subunit protein bL33.